Reading from the N-terminus, the 228-residue chain is UPF0758 protein STER_1430 (228 aa).

The region spanning 103–225 (QIMSSQQVAR…YYSFREERED (123 aa)) is the MPN domain. Residues His174, His176, and Asp187 each contribute to the Zn(2+) site. The short motif at 174–187 (HNHPSGEAYPSRND) is the JAMM motif element.

The protein belongs to the UPF0758 family.

The protein is UPF0758 protein STER_1430 of Streptococcus thermophilus (strain ATCC BAA-491 / LMD-9).